We begin with the raw amino-acid sequence, 179 residues long: Large ribosomal subunit protein uL5 (179 aa).

The protein belongs to the universal ribosomal protein uL5 family. In terms of assembly, part of the 50S ribosomal subunit; part of the 5S rRNA/L5/L18/L25 subcomplex. Contacts the 5S rRNA and the P site tRNA. Forms a bridge to the 30S subunit in the 70S ribosome.

This is one of the proteins that bind and probably mediate the attachment of the 5S RNA into the large ribosomal subunit, where it forms part of the central protuberance. In the 70S ribosome it contacts protein S13 of the 30S subunit (bridge B1b), connecting the 2 subunits; this bridge is implicated in subunit movement. Contacts the P site tRNA; the 5S rRNA and some of its associated proteins might help stabilize positioning of ribosome-bound tRNAs. The chain is Large ribosomal subunit protein uL5 from Anaplasma marginale (strain Florida).